The sequence spans 155 residues: Interleukin-2 (155 aa).

The first 20 residues, 1 to 20, serve as a signal peptide directing secretion; the sequence is MYKMQLLSCIALMLVLVANS. An O-linked (GalNAc...) threonine glycan is attached at Thr-24. Cysteines 79 and 127 form a disulfide. N-linked (GlcNAc...) asparagine glycosylation occurs at Asn-112.

The protein belongs to the IL-2 family.

The protein localises to the secreted. Its function is as follows. Cytokine produced by activated CD4-positive helper T-cells and to a lesser extend activated CD8-positive T-cells and natural killer (NK) cells that plays pivotal roles in the immune response and tolerance. Binds to a receptor complex composed of either the high-affinity trimeric IL-2R (IL2RA/CD25, IL2RB/CD122 and IL2RG/CD132) or the low-affinity dimeric IL-2R (IL2RB and IL2RG). Interaction with the receptor leads to oligomerization and conformation changes in the IL-2R subunits resulting in downstream signaling starting with phosphorylation of JAK1 and JAK3. In turn, JAK1 and JAK3 phosphorylate the receptor to form a docking site leading to the phosphorylation of several substrates including STAT5. This process leads to activation of several pathways including STAT, phosphoinositide-3-kinase/PI3K and mitogen-activated protein kinase/MAPK pathways. Functions as a T-cell growth factor and can increase NK-cell cytolytic activity as well. Promotes strong proliferation of activated B-cells and subsequently immunoglobulin production. Plays a pivotal role in regulating the adaptive immune system by controlling the survival and proliferation of regulatory T-cells, which are required for the maintenance of immune tolerance. Moreover, participates in the differentiation and homeostasis of effector T-cell subsets, including Th1, Th2, Th17 as well as memory CD8-positive T-cells. The protein is Interleukin-2 (IL2) of Vulpes vulpes (Red fox).